We begin with the raw amino-acid sequence, 60 residues long: Large ribosomal subunit protein uL30 (60 aa).

It belongs to the universal ribosomal protein uL30 family. As to quaternary structure, part of the 50S ribosomal subunit.

The sequence is that of Large ribosomal subunit protein uL30 from Streptococcus mutans serotype c (strain ATCC 700610 / UA159).